Reading from the N-terminus, the 32-residue chain is Lectin (32 aa).

Belongs to the leguminous lectin family. Homotetramer.

Its function is as follows. Metalloglycoprotein, containing Ca, Mg, Mn, and Zn and the carbohydrates galactose, glucosamine, mannose, and fucose. It agglutinates erythrocytes of blood group A1. The protein is Lectin of Macrotyloma axillare (Perennial horse gram).